The primary structure comprises 335 residues: AA9 family lytic polysaccharide monooxygenase A (335 aa).

The N-terminal stretch at 1–21 is a signal peptide; that stretch reads MSSFITKTVLAALVAAAGVRA. Residues His22 and His107 each contribute to the Cu(2+) site. Cysteines 77 and 196 form a disulfide. Residues His182 and Gln191 each contribute to the O2 site. Tyr193 lines the Cu(2+) pocket. A disordered region spans residues 241-335; sequence PKMNIAGGSS…ARRHARDMMN (95 aa). The segment covering 251 to 303 has biased composition (low complexity); that stretch reads GAAPSTPATPTTGSGSDTPSNTAAPVESAPAESAAPVESAPAAGNGNQNNGGA. The segment covering 321-335 has biased composition (basic residues); the sequence is CKAKKARRHARDMMN.

Belongs to the polysaccharide monooxygenase AA9 family. It depends on Cu(2+) as a cofactor.

It is found in the secreted. The enzyme catalyses [(1-&gt;4)-beta-D-glucosyl]n+m + reduced acceptor + O2 = 4-dehydro-beta-D-glucosyl-[(1-&gt;4)-beta-D-glucosyl]n-1 + [(1-&gt;4)-beta-D-glucosyl]m + acceptor + H2O.. Functionally, lytic polysaccharide monooxygenase (LPMO) that depolymerizes crystalline and amorphous polysaccharides via the oxidation of scissile alpha- or beta-(1-4)-glycosidic bonds, yielding C1 or C4 oxidation products. Catalysis by LPMOs requires the reduction of the active-site copper from Cu(II) to Cu(I) by a reducing agent and H(2)O(2) or O(2) as a cosubstrate. Is capable of cleaving cellulose, but not chitin. Is also active on tamarind xyloglucan and longer xyloglucan oligosaccharides. Has no activity toward shorter cellooligosaccharides (Glc3-6), as well as toward the xyloglucan-heptamer, birchwood xylan, wheat arabinoxylan, konjac glucomannan, ivory nut mannan, beta-glucan from barley, lichenan from Icelandic moss, starch, and spruce galactoglucomannan. Has unprecedented broad specificity on xyloglucan, cleaving any glycosidicbond in theb-glucan main chain, regardless of xylosyl substitutions. When incubated with a mixture of xyloglucan and cellulose, efficiently attacks the xyloglucan, whereas cellulose conversion is inhibited, suggesting that removal of hemicellulose may be the true function of this LPMO during biomass conversion. This Gibberella zeae (strain ATCC MYA-4620 / CBS 123657 / FGSC 9075 / NRRL 31084 / PH-1) (Wheat head blight fungus) protein is AA9 family lytic polysaccharide monooxygenase A.